The following is a 482-amino-acid chain: Protein farnesyltransferase subunit beta (482 aa).

PFTB repeat units lie at residues 131 to 172 (ESNA…VTLG), 182 to 223 (REKM…SILN), 230 to 271 (TQGL…ILIN), and 278 to 319 (LDSL…VLLQ). (2E,6E)-farnesyl diphosphate contacts are provided by residues 256–259 (HGGY) and 298–301 (RTNK). Asp304 and Cys306 together coordinate Zn(2+). 307–310 (YTFW) is a binding site for (2E,6E)-farnesyl diphosphate. Residues 329–372 (VHGSSHISEGTNEEHHAHDEDDLEDSDDDDDSDEDNDEDSVNGH) form a disordered region. The span at 348–368 (EDDLEDSDDDDDSDEDNDEDS) shows a compositional bias: acidic residues. A PFTB 5 repeat occupies 391–433 (SLGLQRYVLLCSKIPDGGFRDKPRKPRDFYHTCYCLSGLSVAQ). Position 421 (His421) interacts with Zn(2+).

Belongs to the protein prenyltransferase subunit beta family. In terms of assembly, heterodimer of FTA and FTB (farnesyltransferase). Heterodimer of an alpha and a beta subunit. Zn(2+) serves as cofactor.

The catalysed reaction is L-cysteinyl-[protein] + (2E,6E)-farnesyl diphosphate = S-(2E,6E)-farnesyl-L-cysteinyl-[protein] + diphosphate. Functionally, catalyzes the transfer of a farnesyl moiety from farnesyl diphosphate to a cysteine at the fourth position from the C-terminus of several proteins having the C-terminal sequence Cys-aliphatic-aliphatic-X (CaaX). The beta subunit is responsible for peptide-binding. Acts as an abscisic acid (ABA) negative regulator by mediating ASG2 farnesylation and consequently monitoring its subcellular localization. Involved in responses to salt (NaCl) and osmotic (e.g. in response to mannitol and PEG) stresses. The protein is Protein farnesyltransferase subunit beta (FTB) of Arabidopsis thaliana (Mouse-ear cress).